A 467-amino-acid polypeptide reads, in one-letter code: Probable citrate synthase 2, mitochondrial (467 aa).

Active-site residues include His303, His349, and Asp404.

Belongs to the citrate synthase family. Homodimer.

Its subcellular location is the mitochondrion matrix. It catalyses the reaction oxaloacetate + acetyl-CoA + H2O = citrate + CoA + H(+). Its pathway is carbohydrate metabolism; tricarboxylic acid cycle; isocitrate from oxaloacetate: step 1/2. In Aedes aegypti (Yellowfever mosquito), this protein is Probable citrate synthase 2, mitochondrial.